Reading from the N-terminus, the 471-residue chain is 3-isopropylmalate dehydratase large subunit (471 aa).

The [4Fe-4S] cluster site is built by cysteine 347, cysteine 407, and cysteine 410.

The protein belongs to the aconitase/IPM isomerase family. LeuC type 1 subfamily. In terms of assembly, heterodimer of LeuC and LeuD. Requires [4Fe-4S] cluster as cofactor.

It carries out the reaction (2R,3S)-3-isopropylmalate = (2S)-2-isopropylmalate. It participates in amino-acid biosynthesis; L-leucine biosynthesis; L-leucine from 3-methyl-2-oxobutanoate: step 2/4. Functionally, catalyzes the isomerization between 2-isopropylmalate and 3-isopropylmalate, via the formation of 2-isopropylmaleate. This Vibrio parahaemolyticus serotype O3:K6 (strain RIMD 2210633) protein is 3-isopropylmalate dehydratase large subunit.